The following is a 507-amino-acid chain: Cytochrome P450 4X1 (507 aa).

Residues 14–34 (LHLALVFCLALVLMQAVKLYL) traverse the membrane as a helical segment. Cys-452 serves as a coordination point for heme.

Belongs to the cytochrome P450 family. Requires heme as cofactor. As to expression, expressed at high levels in brain, mainly in neurons in different regions, including brain stem, hippocampus, cortex and cerebellum. Also expressed in cerebral vasculature. Not detected in kidney, nor liver.

The protein localises to the endoplasmic reticulum membrane. It localises to the microsome membrane. It catalyses the reaction N-(5Z,8Z,11Z,14Z-eicosatetraenoyl)-ethanolamine + reduced [NADPH--hemoprotein reductase] + O2 = N-(14,15-epoxy-5Z,8Z,11Z-eicosatrienoyl)-ethanolamine + oxidized [NADPH--hemoprotein reductase] + H2O + H(+). In terms of biological role, a cytochrome P450 monooxygenase that selectively catalyzes the epoxidation of the last double bond of the arachidonoyl moiety of anandamide, potentially modulating endocannabinoid signaling. Has no hydroxylase activity toward various fatty acids, steroids and prostaglandins. Mechanistically, uses molecular oxygen inserting one oxygen atom into a substrate, and reducing the second into a water molecule, with two electrons provided by NADPH via cytochrome P450 reductase (CPR; NADPH-ferrihemoprotein reductase). This chain is Cytochrome P450 4X1, found in Rattus norvegicus (Rat).